We begin with the raw amino-acid sequence, 175 residues long: Small ribosomal subunit protein uS4 (175 aa).

In terms of domain architecture, S4 RNA-binding spans 105–169 (RRLQTIVYRQ…SPLADSLHPA (65 aa)).

Belongs to the universal ribosomal protein uS4 family. As to quaternary structure, part of the 30S ribosomal subunit. Contacts protein S5. The interaction surface between S4 and S5 is involved in control of translational fidelity.

In terms of biological role, one of the primary rRNA binding proteins, it binds directly to 16S rRNA where it nucleates assembly of the body of the 30S subunit. Its function is as follows. With S5 and S12 plays an important role in translational accuracy. The sequence is that of Small ribosomal subunit protein uS4 from Haloquadratum walsbyi (strain DSM 16790 / HBSQ001).